The sequence spans 542 residues: Prolyl 3-hydroxylase OGFOD1 (542 aa).

The Fe2OG dioxygenase domain maps to aspartate 134–glycine 239. Residues histidine 155 and aspartate 157 each contribute to the Fe cation site. A 2-oxoglutarate-binding site is contributed by tyrosine 169. Histidine 218 lines the Fe cation pocket. Residue arginine 230 participates in 2-oxoglutarate binding. A disordered region spans residues serine 371–cysteine 435. A compositionally biased stretch (polar residues) spans serine 395–glycine 417.

The protein belongs to the TPA1 family. As to quaternary structure, monomer. Requires Fe(2+) as cofactor. L-ascorbate serves as cofactor.

The protein localises to the cytoplasm. It is found in the nucleus. It carries out the reaction [ribosomal protein uS12]-L-proline + 2-oxoglutarate + O2 = [ribosomal protein uS12]-(3S)-3-hydroxy-L-proline + succinate + CO2. In terms of biological role, prolyl 3-hydroxylase that catalyzes 3-hydroxylation of 'Pro-62' of small ribosomal subunit uS12 (RPS23), thereby regulating protein translation termination efficiency. Involved in stress granule formation. The polypeptide is Prolyl 3-hydroxylase OGFOD1 (OGFOD1) (Bos taurus (Bovine)).